The primary structure comprises 146 residues: Universal stress protein MTH_1154 (146 aa).

The protein belongs to the universal stress protein A family.

This chain is Universal stress protein MTH_1154, found in Methanothermobacter thermautotrophicus (strain ATCC 29096 / DSM 1053 / JCM 10044 / NBRC 100330 / Delta H) (Methanobacterium thermoautotrophicum).